A 286-amino-acid chain; its full sequence is Spermidine/putrescine transport system permease protein PotB (286 aa).

Over 1 to 13 (MKIINNKFQKITV) the chain is Cytoplasmic. A helical membrane pass occupies residues 14 to 33 (AIIFSWLIFFVLIPNLLVLA). Topologically, residues 34–71 (VSFLTRDGSNFYAFPITIENYTNLFNPLYAQVVWNSLS) are periplasmic. An ABC transmembrane type-1 domain is found at 66–274 (VWNSLSMSGI…MALLIFVYYR (209 aa)). A helical transmembrane segment spans residues 72-91 (MSGIATIICLLIGYPFAFMM). The Cytoplasmic segment spans residues 92–100 (SKIHPKYRP). The helical transmembrane segment at 101-120 (LLLFLVVLPFWTNSLIRIYG) threads the bilayer. The Periplasmic segment spans residues 121-151 (MKVFLGVKGILNTMLIDMGILSAPIRILNTE). A helical membrane pass occupies residues 152-171 (IAVIIGLVYLLLPFMILPLY). The Cytoplasmic portion of the chain corresponds to 172–199 (SAIEKLDNRLLEAARDLGANTFQRFFRV). The helical transmembrane segment at 200 to 219 (ILPLTMPGIIAGCLLVLLPA) threads the bilayer. The Periplasmic portion of the chain corresponds to 220 to 252 (MGMFYVADLLGGAKVLLVGNVIKSEFLISRNWP). A helical membrane pass occupies residues 253–272 (FGSAVSIGLTVLMALLIFVY). The Cytoplasmic segment spans residues 273–286 (YRANKLLNRKVELE).

The protein belongs to the binding-protein-dependent transport system permease family. CysTW subfamily.

It localises to the cell inner membrane. Its function is as follows. Required for the activity of the bacterial periplasmic transport system of putrescine and spermidine. In Haemophilus influenzae (strain ATCC 51907 / DSM 11121 / KW20 / Rd), this protein is Spermidine/putrescine transport system permease protein PotB (potB).